We begin with the raw amino-acid sequence, 611 residues long: Serine/arginine repetitive matrix protein 4 (611 aa).

2 disordered regions span residues 38-248 and 263-611; these read ARKP…PLQM and SAAD…STRR. Composition is skewed to basic residues over residues 107 to 123 and 131 to 189; these read RGKK…RRRS and VKKK…HRCP. Low complexity predominate over residues 190–202; that stretch reads SRSQSSESRPSSC. Positions 203–216 are enriched in basic and acidic residues; it reads ESRHRGRSPEEGQK. The segment covering 217 to 226 has biased composition (basic residues); the sequence is SRRRHSRRCS. Over residues 270–290 the composition is skewed to polar residues; the sequence is KTASPLTTSRGRSQEYDSGND. Over residues 291–301 the composition is skewed to low complexity; the sequence is TSSPPSTQTSS. Polar residues predominate over residues 322 to 341; it reads LNSGNTSDSGNSFTTSSPQN. Composition is skewed to low complexity over residues 390–422 and 430–461; these read SRSS…SRST and SRSP…SRYS. Residues 462 to 482 show a composition bias toward basic and acidic residues; the sequence is PSRERDPKYSEKDSQQRERER. Residues 483-498 show a composition bias toward basic residues; the sequence is ARRRRRSYSPMRKRRR. The segment covering 499–508 has biased composition (basic and acidic residues); sequence DSPSHLEARR. A compositionally biased stretch (low complexity) spans 522–549; sequence PSPSSSGSLSSTSSWYSSSSSRSASRSY. Residues 550–564 show a composition bias toward basic residues; it reads SRSRSRSRSRRRSRT. Residues 565 to 580 show a composition bias toward low complexity; that stretch reads RTSSSSSSRSPSPGSR. The span at 581–595 shows a compositional bias: basic residues; it reads SRSRSRSRSRSRSRS. Low complexity predominate over residues 596-611; that stretch reads QSRSYSSADSYSSTRR.

Belongs to the nSR100 family. Post-translationally, phosphorylated. In terms of tissue distribution, specifically expressed in neuronal cells (at protein level). Expressed in the cerebellum.

It localises to the nucleus. Its function is as follows. Splicing factor specifically required for neural cell differentiation. Acts in conjunction with nPTB/PTBP2 by binding directly to its regulated target transcripts and promotes neural-specific exon inclusion in many genes that function in neural cell differentiation. Required to promote the inclusion of neural-specific exon 10 in nPTB/PTBP2, leading to increased expression of neural-specific nPTB/PTBP2. Also promotes the inclusion of exon 16 in DAAM1 in neuron extracts. Promotes alternative splicing of REST transcripts to produce REST isoform 3 (REST4) with greatly reduced repressive activity, thereby activating expression of REST targets in neural cells. Plays an important role during embryonic development as well as in the proper functioning of the adult nervous system. Regulates alternative splicing events in genes with important neuronal functions. This Homo sapiens (Human) protein is Serine/arginine repetitive matrix protein 4 (SRRM4).